The sequence spans 425 residues: Serine--tRNA ligase (425 aa).

231–233 (TAE) provides a ligand contact to L-serine. Position 262–264 (262–264 (RSE)) interacts with ATP. L-serine is bound at residue Glu-285. 349–352 (EISS) lines the ATP pocket. Ser-385 contacts L-serine.

It belongs to the class-II aminoacyl-tRNA synthetase family. Type-1 seryl-tRNA synthetase subfamily. In terms of assembly, homodimer. The tRNA molecule binds across the dimer.

It localises to the cytoplasm. The enzyme catalyses tRNA(Ser) + L-serine + ATP = L-seryl-tRNA(Ser) + AMP + diphosphate + H(+). It carries out the reaction tRNA(Sec) + L-serine + ATP = L-seryl-tRNA(Sec) + AMP + diphosphate + H(+). The protein operates within aminoacyl-tRNA biosynthesis; selenocysteinyl-tRNA(Sec) biosynthesis; L-seryl-tRNA(Sec) from L-serine and tRNA(Sec): step 1/1. Catalyzes the attachment of serine to tRNA(Ser). Is also able to aminoacylate tRNA(Sec) with serine, to form the misacylated tRNA L-seryl-tRNA(Sec), which will be further converted into selenocysteinyl-tRNA(Sec). This chain is Serine--tRNA ligase, found in Bartonella tribocorum (strain CIP 105476 / IBS 506).